Reading from the N-terminus, the 394-residue chain is uncharacterized protein (394 aa).

The next 2 helical transmembrane spans lie at 31–51 (LAIL…LSGL) and 57–77 (LIIA…SLLI).

Belongs to the chlamydial CPn_0129/CT_036/TC_0306 family.

It localises to the cell membrane. This is an uncharacterized protein from Chlamydia pneumoniae (Chlamydophila pneumoniae).